The primary structure comprises 156 residues: Transcription elongation factor GreA (156 aa).

Residues 46-66 (AEYHSAREKQSFIEGRIKELE) adopt a coiled-coil conformation.

The protein belongs to the GreA/GreB family.

Necessary for efficient RNA polymerase transcription elongation past template-encoded arresting sites. The arresting sites in DNA have the property of trapping a certain fraction of elongating RNA polymerases that pass through, resulting in locked ternary complexes. Cleavage of the nascent transcript by cleavage factors such as GreA or GreB allows the resumption of elongation from the new 3'terminus. GreA releases sequences of 2 to 3 nucleotides. The protein is Transcription elongation factor GreA of Ruegeria pomeroyi (strain ATCC 700808 / DSM 15171 / DSS-3) (Silicibacter pomeroyi).